The following is a 1135-amino-acid chain: LRR receptor-like serine/threonine-protein kinase RGI2 (1135 aa).

A signal peptide spans 1–35 (MSLQMPIPRKKALTVSHFSITLSLFLAFFISSTSA). Over 36 to 723 (STNEVSALIS…QRGVHSHRLR (688 aa)) the chain is Extracellular. A disulfide bridge connects residues C69 and C76. N101 and N117 each carry an N-linked (GlcNAc...) asparagine glycan. LRR repeat units follow at residues 105–129 (FTSL…IGDC), 130–153 (SELI…LGKL), 154–177 (KNLQ…LGDC), and 179–203 (SLKN…KIST). 4 short sequence motifs (small peptide recognition) span residues 186–187 (FD), 208–211 (RAGG), 231–236 (VLGLAA), and Y259. 19 LRR repeats span residues 226 to 250 (CRNL…LGQL), 251 to 274 (SKLQ…LGNC), 276 to 298 (ELIN…LGKL), 299 to 323 (QNLE…GFMK), 325 to 345 (LNAI…SFGN), 346 to 370 (LSNL…LSNC), 372 to 395 (KLVQ…GLLK), 397 to 418 (LNIF…LAGC), 419 to 442 (QNLQ…LFQL), 444 to 466 (NLTK…IGNC), 467 to 490 (TSLV…IGFL), 491 to 514 (QNLS…ISNC), 516 to 538 (QLQM…LSSL), 539 to 562 (TKLQ…LGHL), 564 to 586 (SLNR…LGHC), 587 to 610 (TNLQ…LFDI), 612 to 634 (DLDI…RISA), 635 to 658 (LNRL…LSGL), and 659 to 683 (ENLV…VFRQ). N273 is a glycosylation site (N-linked (GlcNAc...) asparagine). A Small peptide recognition motif is present at residues 281–283 (FLY). The Small peptide recognition signature appears at 329–332 (DLSM). A glycan (N-linked (GlcNAc...) asparagine) is linked at N345. The short motif at 351–353 (ELM) is the Small peptide recognition element. N358 and N369 each carry an N-linked (GlcNAc...) asparagine glycan. Short sequence motifs (small peptide recognition) lie at residues 399 to 403 (IFLGW) and 425 to 428 (DLSQ). An N-linked (GlcNAc...) asparagine glycan is attached at N444. The Small peptide recognition signature appears at 447 to 451 (KLLLI). The N-linked (GlcNAc...) asparagine glycan is linked to N465. The short motif at 471-473 (RLR) is the Small peptide recognition element. 4 N-linked (GlcNAc...) asparagine glycosylation sites follow: N492, N502, N521, and N524. N-linked (GlcNAc...) asparagine glycans are attached at residues N598 and N618. 2 N-linked (GlcNAc...) asparagine glycosylation sites follow: N665 and N707. Residues 724 to 744 (IAIGLLISVTAVLAVLGVLAV) form a helical membrane-spanning segment. Residues 745–1135 (IRAKQMIRDD…ATSNVRPNLK (391 aa)) are Cytoplasmic-facing. Phosphothreonine is present on T777. Residues 785 to 1066 (LVEGNVIGKG…KDVAAMLSEI (282 aa)) form the Protein kinase domain. Residues 791–799 (IGKGCSGIV) and K813 each bind ATP. Residues Y868 and Y907 each carry the phosphotyrosine modification. D920 functions as the Proton acceptor in the catalytic mechanism. Residues Y963 and Y970 each carry the phosphotyrosine modification. The tract at residues 1077–1135 (DGCSGSCNNGRERGKDDSTSSVMQQTAKYLRSSSTSFSASSLLYSSSSSATSNVRPNLK) is disordered. Low complexity predominate over residues 1108-1128 (SSSTSFSASSLLYSSSSSATS).

The protein belongs to the protein kinase superfamily. Ser/Thr protein kinase family. As to quaternary structure, binds to RGF peptides such as RGF1, GLV5/CLEL1/RGF2, GLV7/CLEL3/RGF3, GLV3/RGF4, GLV10/CLEL7/RGF5 and RGF10/CLELN; these interactions trigger the formation of heterodimers with SERK1. Interacts with UBP13. Phosphorylated and ubiquitinated upon interaction with RGF1, thus leading to activation a subsequent degradation. Stabilized by UBP12 and UBP13-mediated deubiquitination. Post-translationally, autophosphorylated. In terms of tissue distribution, specific to root meristems, especially in lateral root meristems (LRM).

Its subcellular location is the membrane. It carries out the reaction L-seryl-[protein] + ATP = O-phospho-L-seryl-[protein] + ADP + H(+). The catalysed reaction is L-threonyl-[protein] + ATP = O-phospho-L-threonyl-[protein] + ADP + H(+). Together with RGI1, RGI3, RGI4 and RGI5, acts as a receptor of RGF peptides (e.g. RGF1, GLV5/CLEL1/RGF2, GLV7/CLEL3/RGF3, GLV3/RGF4, GLV10/CLEL7/RGF5 and RGF10/CLELN), peptide hormones which maintain the postembryonic root stem cell niche by regulating the expression levels and patterns of the transcription factor PLETHORA (PLT, e.g. PLT1 and PLT2). Links RGF peptides signal with their downstream components. The chain is LRR receptor-like serine/threonine-protein kinase RGI2 from Arabidopsis thaliana (Mouse-ear cress).